Reading from the N-terminus, the 237-residue chain is Phosphoribosylaminoimidazole-succinocarboxamide synthase (237 aa).

This sequence belongs to the SAICAR synthetase family.

It catalyses the reaction 5-amino-1-(5-phospho-D-ribosyl)imidazole-4-carboxylate + L-aspartate + ATP = (2S)-2-[5-amino-1-(5-phospho-beta-D-ribosyl)imidazole-4-carboxamido]succinate + ADP + phosphate + 2 H(+). Its pathway is purine metabolism; IMP biosynthesis via de novo pathway; 5-amino-1-(5-phospho-D-ribosyl)imidazole-4-carboxamide from 5-amino-1-(5-phospho-D-ribosyl)imidazole-4-carboxylate: step 1/2. The polypeptide is Phosphoribosylaminoimidazole-succinocarboxamide synthase (Marinobacter nauticus (strain ATCC 700491 / DSM 11845 / VT8) (Marinobacter aquaeolei)).